The following is a 283-amino-acid chain: Elongation factor Ts (283 aa).

The segment at 80-83 (TDFV) is involved in Mg(2+) ion dislocation from EF-Tu.

The protein belongs to the EF-Ts family.

Its subcellular location is the cytoplasm. In terms of biological role, associates with the EF-Tu.GDP complex and induces the exchange of GDP to GTP. It remains bound to the aminoacyl-tRNA.EF-Tu.GTP complex up to the GTP hydrolysis stage on the ribosome. The polypeptide is Elongation factor Ts (Haemophilus influenzae (strain PittGG)).